The following is a 432-amino-acid chain: UDP-N-acetylmuramate--L-alanine ligase (432 aa).

109–115 contributes to the ATP binding site; the sequence is GAHGKST.

The protein belongs to the MurCDEF family.

The protein localises to the cytoplasm. It catalyses the reaction UDP-N-acetyl-alpha-D-muramate + L-alanine + ATP = UDP-N-acetyl-alpha-D-muramoyl-L-alanine + ADP + phosphate + H(+). It functions in the pathway cell wall biogenesis; peptidoglycan biosynthesis. In terms of biological role, cell wall formation. This is UDP-N-acetylmuramate--L-alanine ligase from Campylobacter jejuni subsp. jejuni serotype O:2 (strain ATCC 700819 / NCTC 11168).